A 620-amino-acid polypeptide reads, in one-letter code: Chaperone protein HscA homolog (620 aa).

It belongs to the heat shock protein 70 family.

In terms of biological role, chaperone involved in the maturation of iron-sulfur cluster-containing proteins. Has a low intrinsic ATPase activity which is markedly stimulated by HscB. The polypeptide is Chaperone protein HscA homolog (Shewanella sp. (strain MR-4)).